Consider the following 191-residue polypeptide: Crossover junction endodeoxyribonuclease RuvC (191 aa).

Residues D7, E67, and D141 contribute to the active site. Mg(2+) contacts are provided by D7, E67, and D141.

Belongs to the RuvC family. In terms of assembly, homodimer which binds Holliday junction (HJ) DNA. The HJ becomes 2-fold symmetrical on binding to RuvC with unstacked arms; it has a different conformation from HJ DNA in complex with RuvA. In the full resolvosome a probable DNA-RuvA(4)-RuvB(12)-RuvC(2) complex forms which resolves the HJ. The cofactor is Mg(2+).

Its subcellular location is the cytoplasm. The catalysed reaction is Endonucleolytic cleavage at a junction such as a reciprocal single-stranded crossover between two homologous DNA duplexes (Holliday junction).. Its function is as follows. The RuvA-RuvB-RuvC complex processes Holliday junction (HJ) DNA during genetic recombination and DNA repair. Endonuclease that resolves HJ intermediates. Cleaves cruciform DNA by making single-stranded nicks across the HJ at symmetrical positions within the homologous arms, yielding a 5'-phosphate and a 3'-hydroxyl group; requires a central core of homology in the junction. The consensus cleavage sequence is 5'-(A/T)TT(C/G)-3'. Cleavage occurs on the 3'-side of the TT dinucleotide at the point of strand exchange. HJ branch migration catalyzed by RuvA-RuvB allows RuvC to scan DNA until it finds its consensus sequence, where it cleaves and resolves the cruciform DNA. This is Crossover junction endodeoxyribonuclease RuvC from Myxococcus xanthus (strain DK1622).